A 590-amino-acid polypeptide reads, in one-letter code: L-gulonolactone oxidase 5 (590 aa).

The first 31 residues, methionine 1–serine 31, serve as a signal peptide directing secretion. Residues serine 60 to methionine 242 form the FAD-binding PCMH-type domain.

This sequence belongs to the oxygen-dependent FAD-linked oxidoreductase family. FAD is required as a cofactor.

It carries out the reaction L-gulono-1,4-lactone + O2 = L-ascorbate + H2O2 + H(+). It participates in cofactor biosynthesis; L-ascorbate biosynthesis. Functionally, catalyzes the oxidation of L-gulono-1,4-lactone to ascorbic acid. L-gulono-1,4-lactone is oxidized to hydrogen peroxide and L-xylo-hexulonolactone which spontaneously isomerizes to L-ascorbate. The polypeptide is L-gulonolactone oxidase 5 (Arabidopsis thaliana (Mouse-ear cress)).